A 185-amino-acid chain; its full sequence is Cuticle protein 18.6, isoform A (185 aa).

7 consecutive repeat copies span residues 21-24 (AAPA), 33-36 (AAPV), 41-44 (AAPV), 54-57 (AAPA), 133-136 (AAPV), 139-142 (AAPV), and 150-153 (AAPV). One can recognise a Chitin-binding type R&amp;R domain in the interval 64 to 134 (HPQYSFAYNV…KEAGAHPAAA (71 aa)).

Component of the cuticle of migratory locust which contains more than 100 different structural proteins. This is Cuticle protein 18.6, isoform A from Locusta migratoria (Migratory locust).